Reading from the N-terminus, the 286-residue chain is GTP-binding protein 8 (286 aa).

An EngB-type G domain is found at 105 to 278 (KQPEVCFMGR…RCFIAHVTGK (174 aa)). Residues 113 to 120 (GRSNVGKS), 142 to 146 (GHTKK), 160 to 163 (DMPG), 222 to 225 (TKID), and 257 to 259 (VSS) each bind GTP. Positions 120 and 144 each coordinate Mg(2+).

It belongs to the TRAFAC class TrmE-Era-EngA-EngB-Septin-like GTPase superfamily. EngB GTPase family. Requires Mg(2+) as cofactor.

This chain is GTP-binding protein 8 (gtpbp8), found in Danio rerio (Zebrafish).